We begin with the raw amino-acid sequence, 262 residues long: Aminoglycoside (3'') (9) adenylyltransferase (262 aa).

The catalysed reaction is streptomycin + ATP = 3''-O-adenylylstreptomycin + diphosphate. It catalyses the reaction spectinomycin + ATP = 9-O-adenylylspectinomycin + diphosphate. Mediates bacterial resistance to the antibiotics streptomycin and spectinomycin. In Shigella flexneri, this protein is Aminoglycoside (3'') (9) adenylyltransferase.